Reading from the N-terminus, the 84-residue chain is Esculentin-1B (84 aa).

A signal peptide spans 1–22 (MFTLKKPLLLIVLLGMISLSLC). Positions 23–38 (EQERNADEEEGSEIKR) are excised as a propeptide. C78 and C84 form a disulfide bridge.

Belongs to the frog skin active peptide (FSAP) family. Brevinin subfamily. As to expression, expressed by the skin glands.

Its subcellular location is the secreted. Its function is as follows. Shows antibacterial activity against representative Gram-negative and Gram-positive bacterial species, and hemolytic activity. The sequence is that of Esculentin-1B from Pelophylax lessonae (Pool frog).